The following is a 382-amino-acid chain: Caspase-1-B (382 aa).

Positions 1-98 (MTAQLNKVRK…HEHAPSPIQE (98 aa)) are excised as a propeptide. Residues His-216 and Cys-270 contribute to the active site. Residues 283–292 (DVAPAPLEDD) constitute a propeptide that is removed on maturation.

The protein belongs to the peptidase C14A family. As to quaternary structure, heterotetramer that consists of two anti-parallel arranged heterodimers, each one formed by a 20 kDa (Caspase-1 subunit p20) and a 10 kDa (Caspase-1 subunit p10) subunit. In terms of assembly, heterotetramer that consists of two anti-parallel arranged heterodimers, each one formed by a 20 kDa (Caspase-1 subunit p20) and a 10 kDa (Caspase-1 subunit p10) subunit. Can form a heterodimer with isoform epsilon which then has an inhibitory effect. Post-translationally, the two subunits are derived from the precursor sequence by an autocatalytic mechanism.

The protein localises to the cytoplasm. It is found in the cell membrane. It carries out the reaction Strict requirement for an Asp residue at position P1 and has a preferred cleavage sequence of Tyr-Val-Ala-Asp-|-.. Its function is as follows. Thiol protease involved in a variety of inflammatory processes by proteolytically cleaving other proteins, such as the precursors of the inflammatory cytokines interleukin-1 beta (IL1B) and interleukin 18 (IL18) as well as the pyroptosis inducer Gasdermin-D (GSDMD), into active mature peptides. Plays a key role in cell immunity as an inflammatory response initiator: once activated through formation of an inflammasome complex, it initiates a pro-inflammatory response through the cleavage of the two inflammatory cytokines IL1B and IL18, releasing the mature cytokines which are involved in a variety of inflammatory processes. Cleaves a tetrapeptide after an Asp residue at position P1. Also initiates pyroptosis, a programmed lytic cell death pathway, through cleavage of GSDMD. In Xenopus laevis (African clawed frog), this protein is Caspase-1-B (casp1-b).